The following is a 100-amino-acid chain: Urease subunit gamma (100 aa).

This sequence belongs to the urease gamma subunit family. As to quaternary structure, heterotrimer of UreA (gamma), UreB (beta) and UreC (alpha) subunits. Three heterotrimers associate to form the active enzyme.

The protein resides in the cytoplasm. The enzyme catalyses urea + 2 H2O + H(+) = hydrogencarbonate + 2 NH4(+). It functions in the pathway nitrogen metabolism; urea degradation; CO(2) and NH(3) from urea (urease route): step 1/1. The chain is Urease subunit gamma from Methylobacillus flagellatus (strain ATCC 51484 / DSM 6875 / VKM B-1610 / KT).